We begin with the raw amino-acid sequence, 488 residues long: BTB/POZ domain-containing protein 1 (488 aa).

The segment covering 1–19 has biased composition (low complexity); sequence MASLGSAAAGEPATGAEAE. The interval 1–42 is disordered; that stretch reads MASLGSAAAGEPATGAEAEPGPPAPPPPPPPPPAPSPSALGP. A compositionally biased stretch (pro residues) spans 20–36; the sequence is PGPPAPPPPPPPPPAPS. The BTB domain occupies 75–151; that stretch reads SDVRFVLGKG…LYSDEVQIGP (77 aa). Arginine 85 carries the post-translational modification Omega-N-methylarginine. The BACK domain maps to 190-290; the sequence is LTQARLFDEP…IRFPLMTIEE (101 aa).

In terms of assembly, interacts (via C-terminus) with TOP1. Interacts with TRIM5 isoform Delta. Interacts with CUL3. In terms of tissue distribution, strongly expressed in heart and skeletal muscle. Weakly expressed in myoblast C2C12 cells, but strongly up-regulated upon their differentiation into myotubes.

It is found in the cytoplasm. Its pathway is protein modification; protein ubiquitination. In terms of biological role, probable substrate-specific adapter of an E3 ubiquitin-protein ligase complex which mediates the ubiquitination and subsequent proteasomal degradation of target proteins. Seems to regulate expression levels and/or subnuclear distribution of TOP1, via an unknown mechanism. May play a role in mesenchymal differentiation where it promotes myogenic differentiation and suppresses adipogenesis. This chain is BTB/POZ domain-containing protein 1 (Btbd1), found in Mus musculus (Mouse).